A 375-amino-acid polypeptide reads, in one-letter code: Period circadian protein (375 aa).

Disordered stretches follow at residues 28-118 (TAPV…AVTP), 140-189 (KHRE…WEGE), and 220-254 (CQAS…NQYA). A compositionally biased stretch (low complexity) spans 69–91 (SGNFTTGSNLHMSSVTNTSNAGT). Residues 92-113 (GTSGTGNSGGGGGGGGGGGPGN) show a composition bias toward gly residues. Positions 145 to 156 (RGRSGEKNKKSA) are enriched in basic and acidic residues. The segment covering 224 to 243 (GAGGGGSGSVGGTGNIGSGG) has biased composition (gly residues). Residues 245 to 254 (NAQPSTNQYA) show a composition bias toward polar residues.

As to quaternary structure, forms a heterodimer with timeless (TIM); the complex then translocates into the nucleus. In terms of processing, phosphorylated with a circadian rhythmicity, probably by the double-time protein (dbt). Phosphorylation could be implicated in the stability of per monomer and in the formation of heterodimer per-tim.

The protein resides in the nucleus. Its subcellular location is the cytoplasm. It localises to the perinuclear region. Essential for biological clock functions. Determines the period length of circadian and ultradian rhythms; an increase in PER dosage leads to shortened circadian rhythms and a decrease leads to lengthened circadian rhythms. Essential for the circadian rhythmicity of locomotor activity, eclosion behavior, and for the rhythmic component of the male courtship song that originates in the thoracic nervous system. The biological cycle depends on the rhythmic formation and nuclear localization of the TIM-PER complex. Light induces the degradation of TIM, which promotes elimination of PER. Nuclear activity of the heterodimer coordinatively regulates PER and TIM transcription through a negative feedback loop. Behaves as a negative element in circadian transcriptional loop. Does not appear to bind DNA, suggesting indirect transcriptional inhibition. This is Period circadian protein (per) from Drosophila capricorni (Fruit fly).